We begin with the raw amino-acid sequence, 374 residues long: Translocating chain-associated membrane protein 1 (374 aa).

Residues 2 to 29 are Cytoplasmic-facing; it reads AIRKKSTKSPPVLSHEFILQNHADIVSC. A helical membrane pass occupies residues 30 to 50; it reads VAMVFLLGLMFEITAKASIIF. Topologically, residues 51 to 76 are lumenal; that stretch reads VTLQYNVTLPATEEQATESTSLYYYG. Residue Asn-56 is glycosylated (N-linked (GlcNAc...) asparagine). The helical transmembrane segment at 77–97 threads the bilayer; the sequence is IKDLATVFFYMLVAIIIHAII. Residues 98 to 121 are Cytoplasmic-facing; that stretch reads QEYVLDKINRRMHFSKTKHSKFNE. The TLC domain maps to 117 to 326; that stretch reads SKFNESGQLS…NFQLRRWREH (210 aa). Residues 122 to 142 traverse the membrane as a helical segment; sequence SGQLSAFYLFSCIWGTFILIS. Residues 143-159 lie on the Lumenal side of the membrane; that stretch reads ENYISDPTILWRAYPHN. A helical membrane pass occupies residues 160–180; sequence LMTFQMKFFYIAQLAYWFHAF. At 181–192 the chain is on the cytoplasmic side; sequence PELYFQKTKKED. Residues 193 to 213 form a helical membrane-spanning segment; the sequence is IPRQLVYIGLYLFHIAGAYLL. Topologically, residues 214–217 are lumenal; that stretch reads NLNH. The helical transmembrane segment at 218 to 238 threads the bilayer; sequence LGLVLLVLHYFVEFLFHISRL. Residues 239–251 lie on the Cytoplasmic side of the membrane; it reads FYFSDEKYQKGFS. A helical membrane pass occupies residues 252 to 272; it reads LWAVLFVLGRLLTLILSVLTV. Residues 273–297 are Lumenal-facing; the sequence is GFGLARAENQKLDFSAGNFNVLAVR. Residues 298-318 traverse the membrane as a helical segment; that stretch reads IAVLASICITQAFMMWKFINF. Topologically, residues 319–374 are cytoplasmic; that stretch reads QLRRWREHSTFQAPVVKKKPTVTKGRSSRKGTENGVNGTVTSNGADSPRNRKEKSS. Positions 334 to 347 are enriched in basic residues; sequence VKKKPTVTKGRSSR. The tract at residues 334-374 is disordered; that stretch reads VKKKPTVTKGRSSRKGTENGVNGTVTSNGADSPRNRKEKSS. Polar residues predominate over residues 352-363; the sequence is NGVNGTVTSNGA. The residue at position 365 (Ser-365) is a Phosphoserine.

The protein belongs to the TRAM family. Interacts with SEC61B. May interact with Derlin-1/DERL1. N-glycosylated.

The protein localises to the endoplasmic reticulum membrane. In terms of biological role, involved in the translocation of nascent protein chains into or through the endoplasmic reticulum (ER) membrane by facilitating the proper chain positioning at the SEC61 channel. Regulates the exposure of nascent secretory protein chain to the cytosol during translocation into the ER. May affect the phospholipid bilayer in the vicinity of the lateral gate of the SEC61 channel, thereby facilitating ER protein transport. Intimately associates with transmembrane (TM) domain of nascent membrane proteins during the entire integration process into the ER membrane. Associates with the second TM domain of G-protein-coupled receptor opsin/OPSD nascent chain in the ER membrane, which may facilitate its integration into the membrane. Under conditions of ER stress, participates in the disposal of misfolded ER membrane proteins during the unfolded protein response (UPR), an integrated stress response (ISR) pathway, by selectively retrotranslocating misfolded ER-membrane proteins from the ER into the cytosol where they are ubiquitinated and degraded by the proteasome. This Canis lupus familiaris (Dog) protein is Translocating chain-associated membrane protein 1 (TRAM1).